The chain runs to 341 residues: Phosphate acyltransferase (341 aa).

It belongs to the PlsX family. Homodimer. Probably interacts with PlsY.

The protein resides in the cytoplasm. It carries out the reaction a fatty acyl-[ACP] + phosphate = an acyl phosphate + holo-[ACP]. The protein operates within lipid metabolism; phospholipid metabolism. Functionally, catalyzes the reversible formation of acyl-phosphate (acyl-PO(4)) from acyl-[acyl-carrier-protein] (acyl-ACP). This enzyme utilizes acyl-ACP as fatty acyl donor, but not acyl-CoA. The protein is Phosphate acyltransferase of Aliivibrio fischeri (strain ATCC 700601 / ES114) (Vibrio fischeri).